The primary structure comprises 920 residues: Rho guanine nucleotide exchange factor 1 (920 aa).

Residues 39–230 enclose the RGSL domain; that stretch reads DQNSQFQSLE…SLYMRHLGVR (192 aa). A disordered region spans residues 231-404; sequence TKSGDKKSGR…PGWRELVPPD (174 aa). A compositionally biased stretch (basic and acidic residues) spans 281 to 311; it reads DCRHLKVEADAEKPGPADRKGGLGMSSRDRT. Positions 364-380 are enriched in acidic residues; it reads STEDNGETESPEPGDDG. Residues S373, G386, E390, S408, and S412 each carry the phosphoserine modification. The DH domain maps to 415 to 604; sequence KRQEVISELL…REILHHVNQA (190 aa). 2 positions are modified to phosphothreonine: R432 and T694. In terms of domain architecture, PH spans 646–759; the sequence is KLVHEGPLTW…WCNLITETAG (114 aa). Y737 carries the phosphotyrosine; by JAK2 modification. Disordered stretches follow at residues 764 to 797 and 840 to 864; these read PAPA…AEMA and TEED…PGPV. The stretch at 865-894 forms a coiled coil; it reads HTQEIEENLLSLEVAIRQLEELEEEFCRLR. The residue at position 905 (S905) is a Phosphoserine.

As to quaternary structure, interacts with RHOA, GNA12 and GNA13. Homooligomerizes through the coiled coil region. Interacts with CTNNAL1. May interact with CCPG1. Phosphorylated by PKCA. Angiotensin-2 induced Tyr-737 phosphorylation is mediated by JAK2. Isoform 5 is phosphorylated at 'Ser-390'. In terms of tissue distribution, ubiquitously expressed.

The protein resides in the cytoplasm. It is found in the membrane. In terms of biological role, seems to play a role in the regulation of RhoA GTPase by guanine nucleotide-binding alpha-12 (GNA12) and alpha-13 (GNA13) subunits. Acts as a GTPase-activating protein (GAP) for GNA12 and GNA13, and as guanine nucleotide exchange factor (GEF) for RhoA GTPase. Activated G alpha 13/GNA13 stimulates the RhoGEF activity through interaction with the RGS-like domain. This GEF activity is inhibited by binding to activated GNA12. Mediates angiotensin-2-induced RhoA activation. Isoform 3 and isoform 4 do not homooligomerize and show an enhanced RhoGEF activity. In lymphoid follicles, may trigger activation of GNA13 as part of S1PR2-dependent signaling pathway that leads to inhibition of germinal center (GC) B cell growth and migration outside the GC niche. This is Rho guanine nucleotide exchange factor 1 (Arhgef1) from Mus musculus (Mouse).